The following is a 412-amino-acid chain: FAD-dependent monooxygenase nscC (412 aa).

The first 21 residues, 1–21 (MGKQQETILIIGAGIAGLTTS), serve as a signal peptide directing secretion. The FAD site is built by Glu35 and Ala46. N-linked (GlcNAc...) asparagine glycosylation is present at Asn92. Arg119 is a binding site for FAD. N-linked (GlcNAc...) asparagine glycans are attached at residues Asn170 and Asn231. 2 residues coordinate FAD: Asp326 and Gly339.

The protein belongs to the paxM FAD-dependent monooxygenase family. FAD serves as cofactor.

Its pathway is secondary metabolite biosynthesis. Its function is as follows. FAD-dependent monooxygenase; part of the gene cluster that mediates the biosynthesis of neosartoricin B, a prenylated anthracenone that probably exhibits T-cell antiproliferative activity, suggestive of a physiological role as an immunosuppressive agent. The non-reducing polyketide synthase nscA probably synthesizes and cyclizes the decaketide backbone. The hydrolase nscB then mediates the product release through hydrolysis followed by spontaneous decarboxylation. The prenyltransferase nscD catalyzes the addition of the dimethylallyl group to the aromatic C5. The FAD-dependent monooxygenase nscC is then responsible for the stereospecific hydroxylation at C2. Neosartoricin B can be converted into two additional compounds neosartoricins C and D. Neosartoricin C is a spirocyclic compound that is cyclized through the attack of C3 hydroxyl on C14, followed by dehydration. On the other hand, neosartoricin D is a further cyclized compound in which attack of C2 on C14 in neosartoricin C results in the formation of the acetal-containing dioxabicyclo-octanone ring. Both of these compounds are novel and possibly represent related metabolites of the gene cluster. This chain is FAD-dependent monooxygenase nscC, found in Trichophyton verrucosum (strain HKI 0517).